A 373-amino-acid polypeptide reads, in one-letter code: tRNA-specific 2-thiouridylase MnmA (373 aa).

ATP-binding positions include Gly12–Ser19 and Met38. Residues Asn98–Asp100 form an interaction with target base in tRNA region. Cys103 functions as the Nucleophile in the catalytic mechanism. Cysteines 103 and 200 form a disulfide. An ATP-binding site is contributed by Gly127. Residues Lys150 to Gln152 form an interaction with tRNA region. The active-site Cysteine persulfide intermediate is Cys200. Residues Arg312–Tyr313 are interaction with tRNA.

Belongs to the MnmA/TRMU family.

The protein resides in the cytoplasm. It carries out the reaction S-sulfanyl-L-cysteinyl-[protein] + uridine(34) in tRNA + AH2 + ATP = 2-thiouridine(34) in tRNA + L-cysteinyl-[protein] + A + AMP + diphosphate + H(+). Catalyzes the 2-thiolation of uridine at the wobble position (U34) of tRNA, leading to the formation of s(2)U34. In Streptococcus pneumoniae (strain P1031), this protein is tRNA-specific 2-thiouridylase MnmA.